The following is a 343-amino-acid chain: Methionine import ATP-binding protein MetN 1 (343 aa).

Positions 2 to 241 (IKLSNITKVF…PKTPLAQKFI (240 aa)) constitute an ABC transporter domain. ATP is bound at residue 38 to 45 (GASGAGKS).

It belongs to the ABC transporter superfamily. Methionine importer (TC 3.A.1.24) family. The complex is composed of two ATP-binding proteins (MetN), two transmembrane proteins (MetI) and a solute-binding protein (MetQ).

Its subcellular location is the cell inner membrane. The catalysed reaction is L-methionine(out) + ATP + H2O = L-methionine(in) + ADP + phosphate + H(+). The enzyme catalyses D-methionine(out) + ATP + H2O = D-methionine(in) + ADP + phosphate + H(+). Part of the ABC transporter complex MetNIQ involved in methionine import. Responsible for energy coupling to the transport system. This chain is Methionine import ATP-binding protein MetN 1, found in Salmonella typhimurium (strain LT2 / SGSC1412 / ATCC 700720).